The sequence spans 208 residues: Protein-L-isoaspartate O-methyltransferase (208 aa).

S59 is a catalytic residue.

It belongs to the methyltransferase superfamily. L-isoaspartyl/D-aspartyl protein methyltransferase family.

Its subcellular location is the cytoplasm. It catalyses the reaction [protein]-L-isoaspartate + S-adenosyl-L-methionine = [protein]-L-isoaspartate alpha-methyl ester + S-adenosyl-L-homocysteine. In terms of biological role, catalyzes the methyl esterification of L-isoaspartyl residues in peptides and proteins that result from spontaneous decomposition of normal L-aspartyl and L-asparaginyl residues. It plays a role in the repair and/or degradation of damaged proteins. The protein is Protein-L-isoaspartate O-methyltransferase of Photorhabdus laumondii subsp. laumondii (strain DSM 15139 / CIP 105565 / TT01) (Photorhabdus luminescens subsp. laumondii).